The sequence spans 707 residues: Protein kinase C theta type (707 aa).

In terms of domain architecture, C2 spans 1–107 (MSPFLRIGLS…KNNGRTEIWL (107 aa)). Phosphotyrosine; by LCK is present on Tyr90. The Phorbol-ester/DAG-type 1 zinc finger occupies 159-209 (CHEFTATFFPQPTFCSVCHEFVWGLNKQGYQCRQCNAAIHKKCIDKVIAKC). Phosphothreonine; by autocatalysis is present on Thr219. The Phorbol-ester/DAG-type 2 zinc finger occupies 231-281 (PHRFKVYNYKSPTFCEHCGTLLWGLARQGLKCDACGMNVHHRCQTKVANLC). Residues 327 to 365 (ETRPPCVPTPGKREPQGISWDSPLDGSNKSAGPPEPEVS) form a disordered region. A Phosphoserine modification is found at Ser348. A Protein kinase domain is found at 380–634 (FILHKMLGKG…RGDIRQHPLF (255 aa)). ATP is bound by residues 386–394 (LGKGSFGKV) and Lys409. Asp504 acts as the Proton acceptor in catalysis. Residue Thr538 is modified to Phosphothreonine; by PDPK1. An AGC-kinase C-terminal domain is found at 635–706 (REINWEELER…INPGMETLIC (72 aa)). Ser676 is modified (phosphoserine; by autocatalysis). Ser685 bears the Phosphoserine mark. Ser695 carries the phosphoserine; by autocatalysis modification.

Belongs to the protein kinase superfamily. AGC Ser/Thr protein kinase family. PKC subfamily. In terms of assembly, part of a membrane raft complex composed at least of BCL10, CARD11, MALT1 and IKBKB. Interacts with GLRX3 (via N-terminus). Interacts with ECT2. Interacts with CCDC88A/GIV; the interaction leads to phosphorylation of CCDC88A and inhibition of its guanine nucleotide exchange factor activity. Interacts with CD28. The cofactor is Mg(2+). Post-translationally, autophosphorylation at Thr-219 is required for targeting to the TCR and cellular function of PRKCQ upon antigen receptor ligation. Following TCR stimulation, phosphorylated at Tyr-90 and Ser-685. T-lymphocytes and skeletal muscle.

The protein localises to the cytoplasm. The protein resides in the cell membrane. It catalyses the reaction L-seryl-[protein] + ATP = O-phospho-L-seryl-[protein] + ADP + H(+). It carries out the reaction L-threonyl-[protein] + ATP = O-phospho-L-threonyl-[protein] + ADP + H(+). With respect to regulation, novel PKCs (PRKCD, PRKCE, PRKCH and PRKCQ) are calcium-insensitive, but activated by diacylglycerol (DAG) and phosphatidylserine. Three specific sites; Thr-538 (activation loop of the kinase domain), Ser-676 (turn motif) and Ser-695 (hydrophobic region), need to be phosphorylated for its full activation. Functionally, calcium-independent, phospholipid- and diacylglycerol (DAG)-dependent serine/threonine-protein kinase that mediates non-redundant functions in T-cell receptor (TCR) signaling, including T-cells activation, proliferation, differentiation and survival, by mediating activation of multiple transcription factors such as NF-kappa-B, JUN, NFATC1 and NFATC2. In TCR-CD3/CD28-co-stimulated T-cells, is required for the activation of NF-kappa-B and JUN, which in turn are essential for IL2 production, and participates in the calcium-dependent NFATC1 and NFATC2 transactivation. Mediates the activation of the canonical NF-kappa-B pathway (NFKB1) by direct phosphorylation of CARD11 on several serine residues, inducing CARD11 association with lipid rafts and recruitment of the BCL10-MALT1 complex, which then activates IKK complex, resulting in nuclear translocation and activation of NFKB1. May also play an indirect role in activation of the non-canonical NF-kappa-B (NFKB2) pathway. In the signaling pathway leading to JUN activation, acts by phosphorylating the mediator STK39/SPAK and may not act through MAP kinases signaling. Plays a critical role in TCR/CD28-induced NFATC1 and NFATC2 transactivation by participating in the regulation of reduced inositol 1,4,5-trisphosphate generation and intracellular calcium mobilization. After costimulation of T-cells through CD28 can phosphorylate CBLB and is required for the ubiquitination and subsequent degradation of CBLB, which is a prerequisite for the activation of TCR. During T-cells differentiation, plays an important role in the development of T-helper 2 (Th2) cells following immune and inflammatory responses, and, in the development of inflammatory autoimmune diseases, is necessary for the activation of IL17-producing Th17 cells. May play a minor role in Th1 response. Upon TCR stimulation, mediates T-cell protective survival signal by phosphorylating BAD, thus protecting T-cells from BAD-induced apoptosis, and by up-regulating BCL-X(L)/BCL2L1 levels through NF-kappa-B and JUN pathways. In platelets, regulates signal transduction downstream of the ITGA2B, CD36/GP4, F2R/PAR1 and F2RL3/PAR4 receptors, playing a positive role in 'outside-in' signaling and granule secretion signal transduction. May relay signals from the activated ITGA2B receptor by regulating the uncoupling of WASP and WIPF1, thereby permitting the regulation of actin filament nucleation and branching activity of the Arp2/3 complex. May mediate inhibitory effects of free fatty acids on insulin signaling by phosphorylating IRS1, which in turn blocks IRS1 tyrosine phosphorylation and downstream activation of the PI3K/AKT pathway. Phosphorylates MSN (moesin) in the presence of phosphatidylglycerol or phosphatidylinositol. Phosphorylates PDPK1 at 'Ser-504' and 'Ser-532' and negatively regulates its ability to phosphorylate PKB/AKT1. Phosphorylates CCDC88A/GIV and inhibits its guanine nucleotide exchange factor activity. Phosphorylates and activates LRRK1, which phosphorylates RAB proteins involved in intracellular trafficking. The polypeptide is Protein kinase C theta type (Prkcq) (Mus musculus (Mouse)).